We begin with the raw amino-acid sequence, 128 residues long: Putative histidinol dehydrogenase (128 aa).

Residues glutamine 21–arginine 84 form a disordered region. 2 stretches are compositionally biased toward basic and acidic residues: residues histidine 34–alanine 50 and glutamine 72–serine 81.

It belongs to the histidinol dehydrogenase family.

The catalysed reaction is L-histidinol + 2 NAD(+) + H2O = L-histidine + 2 NADH + 3 H(+). It functions in the pathway amino-acid biosynthesis; L-histidine biosynthesis; L-histidine from 5-phospho-alpha-D-ribose 1-diphosphate: step 9/9. Its function is as follows. Catalyzes the sequential NAD-dependent oxidations of L-histidinol to L-histidinaldehyde and then to L-histidine. The chain is Putative histidinol dehydrogenase (hisD) from Azospirillum brasilense.